The chain runs to 249 residues: Octanoyltransferase (249 aa).

The disordered stretch occupies residues 1 to 23; the sequence is MVNSPQNPRQDQRQDLDLTSFSA. The BPL/LPL catalytic domain occupies 57-241; the sequence is GEAPELVWLL…AFEELFGPTR (185 aa). Substrate contacts are provided by residues 95–102, 170–172, and 183–185; these read RGGQLTYH, AIG, and GIA. Cysteine 201 (acyl-thioester intermediate) is an active-site residue.

This sequence belongs to the LipB family.

The protein resides in the cytoplasm. The catalysed reaction is octanoyl-[ACP] + L-lysyl-[protein] = N(6)-octanoyl-L-lysyl-[protein] + holo-[ACP] + H(+). The protein operates within protein modification; protein lipoylation via endogenous pathway; protein N(6)-(lipoyl)lysine from octanoyl-[acyl-carrier-protein]: step 1/2. Catalyzes the transfer of endogenously produced octanoic acid from octanoyl-acyl-carrier-protein onto the lipoyl domains of lipoate-dependent enzymes. Lipoyl-ACP can also act as a substrate although octanoyl-ACP is likely to be the physiological substrate. The chain is Octanoyltransferase from Bradyrhizobium diazoefficiens (strain JCM 10833 / BCRC 13528 / IAM 13628 / NBRC 14792 / USDA 110).